Consider the following 200-residue polypeptide: Holliday junction branch migration complex subunit RuvA (200 aa).

The segment at 1 to 64 is domain I; the sequence is MIGHLRGIIV…EDAHTLYGFH (64 aa). Residues 65–143 form a domain II region; that stretch reads NDHERRLFRA…RWHTNDTPSP (79 aa). The segment at 144–148 is flexible linker; that stretch reads EGLRS. The tract at residues 149–200 is domain III; it reads SNTQPTQDAISALMALGYKPQEAKRAIDAIQKPDLSAETLIRLALKQMVLGT.

It belongs to the RuvA family. In terms of assembly, homotetramer. Forms an RuvA(8)-RuvB(12)-Holliday junction (HJ) complex. HJ DNA is sandwiched between 2 RuvA tetramers; dsDNA enters through RuvA and exits via RuvB. An RuvB hexamer assembles on each DNA strand where it exits the tetramer. Each RuvB hexamer is contacted by two RuvA subunits (via domain III) on 2 adjacent RuvB subunits; this complex drives branch migration. In the full resolvosome a probable DNA-RuvA(4)-RuvB(12)-RuvC(2) complex forms which resolves the HJ.

The protein resides in the cytoplasm. The RuvA-RuvB-RuvC complex processes Holliday junction (HJ) DNA during genetic recombination and DNA repair, while the RuvA-RuvB complex plays an important role in the rescue of blocked DNA replication forks via replication fork reversal (RFR). RuvA specifically binds to HJ cruciform DNA, conferring on it an open structure. The RuvB hexamer acts as an ATP-dependent pump, pulling dsDNA into and through the RuvAB complex. HJ branch migration allows RuvC to scan DNA until it finds its consensus sequence, where it cleaves and resolves the cruciform DNA. The polypeptide is Holliday junction branch migration complex subunit RuvA (Coxiella burnetii (strain CbuG_Q212) (Coxiella burnetii (strain Q212))).